The sequence spans 754 residues: Circadian input-output histidine kinase CikA (754 aa).

The tract at residues 1–183 (MLAPSSNCSL…QVSAQIRLSL (183 aa)) is N-terminal domain, not required to complement the deletion strain. Residues 184–338 (DLSEILTTTI…RDILQHLAEH (155 aa)) are GAF domain, required to complement the deletion strain. The region spanning 390–611 (TMSHELRTPL…TFTVWIPEQT (222 aa)) is the Histidine kinase domain. The residue at position 393 (H393) is a Phosphohistidine; by autocatalysis. The segment at 606-754 (WIPEQTLIEP…NLSEGDRPSS (149 aa)) is psR domain, required to complement the deletion strain and for cell pole localization, attenuates autophosphorylation activity. Binds KaiB(fs). The Response regulatory domain occupies 629–742 (HILLLEEEDE…LLLTTLQGLC (114 aa)).

In the N-terminal section; belongs to the phytochrome family. In terms of assembly, homodimer. Part of the circadian clock (KaiA, KaiB, KaiC, CikA, RpaA, SasA), the composition of which varies during the circadian cycle. Interacts with LdpA. KaiA and CikA compete for binding to KaiB(fs).

The protein localises to the cytoplasm. It localises to the membrane. The catalysed reaction is ATP + protein L-histidine = ADP + protein N-phospho-L-histidine.. In terms of biological role, functions in an input pathway to the Kai circadian clock. Senses oxidized quinones via its C-terminal pseudo-receiver domain, providing a link between cell metabolism and the clock. Affects the ratio of phosphorylated to unphosphorylated KaiC, binds quinones via its pseudo-receptor domain. Quinone-binding destabilizes the protein rapidly. Autophosphorylates, does not transfer the phosphate to its pseudo-receiver (PsR) domain. May play a role in cell division, as suggested by its polar location and increased cell length in a deletion strain. Member of the two-component regulatory system CikA/RpaA output pathway from the circadian clock, negatively regulating kaiBC expression independently of labA and of sasA. One of three clock output pathways. Dephosphorylates phospho-RpaA, enhanced by KaiB and KaiC, has only modest kinase activity on RpaA. A very robust clock is reconstituted with KaiA, KaiB, KaiC, SasA, CikA and RpaA; output is measured by transcription from an appropriate reporter. This chain is Circadian input-output histidine kinase CikA, found in Synechococcus elongatus (strain ATCC 33912 / PCC 7942 / FACHB-805) (Anacystis nidulans R2).